The sequence spans 103 residues: Large ribosomal subunit protein bL21 (103 aa).

It belongs to the bacterial ribosomal protein bL21 family. Part of the 50S ribosomal subunit. Contacts protein L20.

Functionally, this protein binds to 23S rRNA in the presence of protein L20. The sequence is that of Large ribosomal subunit protein bL21 from Acidithiobacillus ferrooxidans (strain ATCC 23270 / DSM 14882 / CIP 104768 / NCIMB 8455) (Ferrobacillus ferrooxidans (strain ATCC 23270)).